We begin with the raw amino-acid sequence, 206 residues long: Tumor protein D54 (206 aa).

Methionine 1 carries the N-acetylmethionine modification. Polar residues predominate over residues 1–14 (MDSAGQDINLNSPN). The disordered stretch occupies residues 1–24 (MDSAGQDINLNSPNKGLLSDSMTD). 4 positions are modified to phosphoserine: serine 3, serine 12, serine 19, and serine 21. The stretch at 38–82 (VEGLTEAEEEELRAELTKVEEEIVTLRQVLAAKERHCGELKRRLG) forms a coiled coil. A phosphoserine mark is found at serine 96, serine 149, and serine 161. Threonine 163 is subject to Phosphothreonine. Residue serine 166 is modified to Phosphoserine. Phosphothreonine is present on threonine 173. A compositionally biased stretch (basic and acidic residues) spans 175–185 (KSKVVGDRENG). The interval 175 to 206 (KSKVVGDRENGSDNLPSSAGSGDKPLSDPAPF) is disordered. Residues serine 192 and serine 195 each carry the phosphoserine modification.

The protein belongs to the TPD52 family. In terms of assembly, forms a homodimer or heterodimer with other members of the family. Interacts with MAL2.

This Homo sapiens (Human) protein is Tumor protein D54 (TPD52L2).